A 148-amino-acid chain; its full sequence is Arginine repressor (148 aa).

This sequence belongs to the ArgR family.

It is found in the cytoplasm. Its pathway is amino-acid biosynthesis; L-arginine biosynthesis [regulation]. Its function is as follows. Regulates arginine biosynthesis genes. The chain is Arginine repressor from Chlorobium chlorochromatii (strain CaD3).